Consider the following 221-residue polypeptide: MAGSRRLAMRLLSGCAWVRGSDSAVLGRLRDEAVVHPGFLSQEEEDTLTRELEPQLRRRRYEYDHWDAAIHGFRETEKSCWSDASQVILQRVRAAAFGPDQSLLSPVHVLDLEPRGYIKPHVDSVKFCGSTIAGLSLLSPSVMKLVHTQEPEQWLELLLEPGSLYILRGSARYDFSHEILRDEESFFGEHRVPRGRRISVICRSLPEGMGPGRPEEPPPAC.

The N-terminal 23 residues, 1–23 (MAGSRRLAMRLLSGCAWVRGSDS), are a transit peptide targeting the mitochondrion. Positions 121 and 123 each coordinate Fe cation. Position 165 (tyrosine 165) interacts with 2-oxoglutarate. A Fe cation-binding site is contributed by histidine 177. 2-oxoglutarate is bound by residues 197-199 (RIS) and arginine 203.

It belongs to the alkB family. It depends on Fe(2+) as a cofactor. In terms of tissue distribution, widely expressed.

The protein localises to the mitochondrion matrix. May function as protein hydroxylase; can catalyze auto-hydroxylation at Leu-110 (in vitro), but this activity may be due to the absence of the true substrate. Required to induce programmed necrosis in response to DNA damage caused by cytotoxic alkylating agents. Acts by triggering the collapse of mitochondrial membrane potential and loss of mitochondrial function that leads to energy depletion and cell death. ALKBH7-mediated necrosis is probably required to prevent the accumulation of cells with DNA damage. Does not display DNA demethylase activity. Involved in fatty acid metabolism. In Mus musculus (Mouse), this protein is Alpha-ketoglutarate-dependent dioxygenase alkB homolog 7, mitochondrial (Alkbh7).